The sequence spans 224 residues: Thiamine-phosphate synthase (224 aa).

Residues 44 to 48 (QFREK) and Asn79 contribute to the 4-amino-2-methyl-5-(diphosphooxymethyl)pyrimidine site. 2 residues coordinate Mg(2+): Asp80 and Asp99. Ser117 is a 4-amino-2-methyl-5-(diphosphooxymethyl)pyrimidine binding site. Position 143-145 (143-145 (TET)) interacts with 2-[(2R,5Z)-2-carboxy-4-methylthiazol-5(2H)-ylidene]ethyl phosphate. Residue Lys146 participates in 4-amino-2-methyl-5-(diphosphooxymethyl)pyrimidine binding. Residues Gly175 and 195-196 (IS) contribute to the 2-[(2R,5Z)-2-carboxy-4-methylthiazol-5(2H)-ylidene]ethyl phosphate site.

This sequence belongs to the thiamine-phosphate synthase family. The cofactor is Mg(2+).

It catalyses the reaction 2-[(2R,5Z)-2-carboxy-4-methylthiazol-5(2H)-ylidene]ethyl phosphate + 4-amino-2-methyl-5-(diphosphooxymethyl)pyrimidine + 2 H(+) = thiamine phosphate + CO2 + diphosphate. It carries out the reaction 2-(2-carboxy-4-methylthiazol-5-yl)ethyl phosphate + 4-amino-2-methyl-5-(diphosphooxymethyl)pyrimidine + 2 H(+) = thiamine phosphate + CO2 + diphosphate. The catalysed reaction is 4-methyl-5-(2-phosphooxyethyl)-thiazole + 4-amino-2-methyl-5-(diphosphooxymethyl)pyrimidine + H(+) = thiamine phosphate + diphosphate. The protein operates within cofactor biosynthesis; thiamine diphosphate biosynthesis; thiamine phosphate from 4-amino-2-methyl-5-diphosphomethylpyrimidine and 4-methyl-5-(2-phosphoethyl)-thiazole: step 1/1. Functionally, condenses 4-methyl-5-(beta-hydroxyethyl)thiazole monophosphate (THZ-P) and 2-methyl-4-amino-5-hydroxymethyl pyrimidine pyrophosphate (HMP-PP) to form thiamine monophosphate (TMP). This chain is Thiamine-phosphate synthase, found in Bacillus velezensis (strain DSM 23117 / BGSC 10A6 / LMG 26770 / FZB42) (Bacillus amyloliquefaciens subsp. plantarum).